A 32-amino-acid chain; its full sequence is Cytochrome b6-f complex subunit 6 (32 aa).

A helical membrane pass occupies residues 4-26 (ITSYVGLLFTALGFTLGLYFGLT).

This sequence belongs to the PetL family. As to quaternary structure, the 4 large subunits of the cytochrome b6-f complex are cytochrome b6, subunit IV (17 kDa polypeptide, PetD), cytochrome f and the Rieske protein, while the 4 small subunits are PetG, PetL, PetM and PetN. The complex functions as a dimer.

It is found in the plastid. The protein resides in the chloroplast thylakoid membrane. Functionally, component of the cytochrome b6-f complex, which mediates electron transfer between photosystem II (PSII) and photosystem I (PSI), cyclic electron flow around PSI, and state transitions. PetL is important for photoautotrophic growth as well as for electron transfer efficiency and stability of the cytochrome b6-f complex. The polypeptide is Cytochrome b6-f complex subunit 6 (Tetradesmus obliquus (Green alga)).